Here is a 302-residue protein sequence, read N- to C-terminus: Pentatricopeptide repeat-containing protein At4g38150 (302 aa).

A compositionally biased stretch (polar residues) spans 26–40 (SATRFLSTGDNGQVD). Disordered regions lie at residues 26–82 (SATR…TTLS) and 94–116 (VNQD…PPPE). The span at 54-67 (LRGERSSNSHREPP) shows a compositional bias: basic and acidic residues. 4 PPR repeats span residues 130-164 (LIPN…GTIP), 165-199 (EVVI…GIAP), 200-234 (NAFS…GHSP), and 235-269 (NVPT…GFAV).

The protein belongs to the PPR family. P subfamily.

The sequence is that of Pentatricopeptide repeat-containing protein At4g38150 from Arabidopsis thaliana (Mouse-ear cress).